A 330-amino-acid polypeptide reads, in one-letter code: Ferredoxin--NADP reductase (330 aa).

FAD contacts are provided by Thr-19, Asp-38, Gln-46, Tyr-51, Ala-91, Phe-129, Asp-286, and Ser-327.

This sequence belongs to the ferredoxin--NADP reductase type 2 family. In terms of assembly, homodimer. Requires FAD as cofactor.

The catalysed reaction is 2 reduced [2Fe-2S]-[ferredoxin] + NADP(+) + H(+) = 2 oxidized [2Fe-2S]-[ferredoxin] + NADPH. This Nocardioides sp. (strain ATCC BAA-499 / JS614) protein is Ferredoxin--NADP reductase.